Consider the following 337-residue polypeptide: DNA-directed RNA polymerase subunit alpha (337 aa).

The alpha N-terminal domain (alpha-NTD) stretch occupies residues 1-233 (MVREDVVGST…DLLIPFLHAE (233 aa)). Residues 265–337 (KGIPLTCIFI…FAINLLNKKL (73 aa)) form an alpha C-terminal domain (alpha-CTD) region.

This sequence belongs to the RNA polymerase alpha chain family. As to quaternary structure, in plastids the minimal PEP RNA polymerase catalytic core is composed of four subunits: alpha, beta, beta', and beta''. When a (nuclear-encoded) sigma factor is associated with the core the holoenzyme is formed, which can initiate transcription.

It is found in the plastid. Its subcellular location is the chloroplast. It catalyses the reaction RNA(n) + a ribonucleoside 5'-triphosphate = RNA(n+1) + diphosphate. DNA-dependent RNA polymerase catalyzes the transcription of DNA into RNA using the four ribonucleoside triphosphates as substrates. The polypeptide is DNA-directed RNA polymerase subunit alpha (Phalaenopsis aphrodite subsp. formosana (Moth orchid)).